A 283-amino-acid polypeptide reads, in one-letter code: Probable replication-associated protein repA1 (283 aa).

It belongs to the IncFII RepA family.

Functionally, this protein is essential for plasmid replication; it is involved in copy control functions. This is Probable replication-associated protein repA1 (repA1) from Buchnera aphidicola subsp. Acyrthosiphon pisum (strain APS) (Acyrthosiphon pisum symbiotic bacterium).